The following is a 192-amino-acid chain: Thymidine kinase (192 aa).

Residues 9 to 16 and 85 to 88 each bind ATP; these read GAMNSGKS and DEVQ. Catalysis depends on Glu86, which acts as the Proton acceptor. Residues Cys143, Cys146, Cys181, and Cys184 each coordinate Zn(2+).

The protein belongs to the thymidine kinase family. As to quaternary structure, homotetramer.

It is found in the cytoplasm. It carries out the reaction thymidine + ATP = dTMP + ADP + H(+). The polypeptide is Thymidine kinase (Shouchella clausii (strain KSM-K16) (Alkalihalobacillus clausii)).